We begin with the raw amino-acid sequence, 556 residues long: Oxygen-dependent choline dehydrogenase (556 aa).

Position 4-33 (4-33 (DYIIIGAGSAGNVLATRLTEDPNTTVLLLE)) interacts with FAD. The Proton acceptor role is filled by histidine 473.

Belongs to the GMC oxidoreductase family. Requires FAD as cofactor.

It carries out the reaction choline + A = betaine aldehyde + AH2. The catalysed reaction is betaine aldehyde + NAD(+) + H2O = glycine betaine + NADH + 2 H(+). Its pathway is amine and polyamine biosynthesis; betaine biosynthesis via choline pathway; betaine aldehyde from choline (cytochrome c reductase route): step 1/1. Functionally, involved in the biosynthesis of the osmoprotectant glycine betaine. Catalyzes the oxidation of choline to betaine aldehyde and betaine aldehyde to glycine betaine at the same rate. This chain is Oxygen-dependent choline dehydrogenase, found in Escherichia coli O17:K52:H18 (strain UMN026 / ExPEC).